A 283-amino-acid polypeptide reads, in one-letter code: Pantothenate synthetase (283 aa).

30-37 (MGNLHDGH) is a binding site for ATP. The active-site Proton donor is the His37. Gln61 is a (R)-pantoate binding site. A beta-alanine-binding site is contributed by Gln61. 149 to 152 (GEKD) is an ATP binding site. Position 155 (Gln155) interacts with (R)-pantoate. An ATP-binding site is contributed by 186 to 189 (LSSR).

This sequence belongs to the pantothenate synthetase family. Homodimer.

The protein resides in the cytoplasm. The catalysed reaction is (R)-pantoate + beta-alanine + ATP = (R)-pantothenate + AMP + diphosphate + H(+). Its pathway is cofactor biosynthesis; (R)-pantothenate biosynthesis; (R)-pantothenate from (R)-pantoate and beta-alanine: step 1/1. Its function is as follows. Catalyzes the condensation of pantoate with beta-alanine in an ATP-dependent reaction via a pantoyl-adenylate intermediate. This Escherichia coli O6:H1 (strain CFT073 / ATCC 700928 / UPEC) protein is Pantothenate synthetase.